Reading from the N-terminus, the 395-residue chain is Non-structural protein 1 (395 aa).

Residues 328–395 (NYIQLLNEHS…AEQMFRHQCF (68 aa)) form the DRBM domain.

This is Non-structural protein 1 from Homo sapiens (Human).